Reading from the N-terminus, the 77-residue chain is Sec-independent protein translocase protein TatA (77 aa).

A helical transmembrane segment spans residues 1–21 (MGSLSIWHWILVIAVVLLLFG). A compositionally biased stretch (basic and acidic residues) spans 42–60 (GMQDDDKPADKPEPAKSIE). Positions 42 to 77 (GMQDDDKPADKPEPAKSIEHNAAPTAARSDVGSKAV) are disordered.

The protein belongs to the TatA/E family. As to quaternary structure, the Tat system comprises two distinct complexes: a TatABC complex, containing multiple copies of TatA, TatB and TatC subunits, and a separate TatA complex, containing only TatA subunits. Substrates initially bind to the TatABC complex, which probably triggers association of the separate TatA complex to form the active translocon.

The protein resides in the cell inner membrane. Part of the twin-arginine translocation (Tat) system that transports large folded proteins containing a characteristic twin-arginine motif in their signal peptide across membranes. TatA could form the protein-conducting channel of the Tat system. The sequence is that of Sec-independent protein translocase protein TatA from Bradyrhizobium diazoefficiens (strain JCM 10833 / BCRC 13528 / IAM 13628 / NBRC 14792 / USDA 110).